The sequence spans 269 residues: 4-hydroxy-tetrahydrodipicolinate reductase (269 aa).

NAD(+) is bound by residues 11 to 16 (GGSGRM) and Glu-37. Residue Arg-38 participates in NADP(+) binding. NAD(+)-binding positions include 101–103 (GTT) and 125–128 (AGNM). His-158 (proton donor/acceptor) is an active-site residue. His-159 provides a ligand contact to (S)-2,3,4,5-tetrahydrodipicolinate. Catalysis depends on Lys-162, which acts as the Proton donor. 168–169 (GT) is a binding site for (S)-2,3,4,5-tetrahydrodipicolinate.

Belongs to the DapB family.

Its subcellular location is the cytoplasm. It catalyses the reaction (S)-2,3,4,5-tetrahydrodipicolinate + NAD(+) + H2O = (2S,4S)-4-hydroxy-2,3,4,5-tetrahydrodipicolinate + NADH + H(+). It carries out the reaction (S)-2,3,4,5-tetrahydrodipicolinate + NADP(+) + H2O = (2S,4S)-4-hydroxy-2,3,4,5-tetrahydrodipicolinate + NADPH + H(+). Its pathway is amino-acid biosynthesis; L-lysine biosynthesis via DAP pathway; (S)-tetrahydrodipicolinate from L-aspartate: step 4/4. Its function is as follows. Catalyzes the conversion of 4-hydroxy-tetrahydrodipicolinate (HTPA) to tetrahydrodipicolinate. This chain is 4-hydroxy-tetrahydrodipicolinate reductase, found in Dinoroseobacter shibae (strain DSM 16493 / NCIMB 14021 / DFL 12).